A 728-amino-acid chain; its full sequence is Golgin subfamily A member 5 (728 aa).

Ser2 carries the post-translational modification N-acetylserine. Topologically, residues 2-695 (SWFADLAGRA…IFLRRYPIAR (694 aa)) are cytoplasmic. A dimethylated arginine mark is found at Arg27 and Arg89. A disordered region spans residues 88-202 (SRTGGDASHP…KKSTEESTVS (115 aa)). Ser116 carries the phosphoserine modification. Residues 134–146 (PTGRVEIKKEKGK) are compositionally biased toward basic and acidic residues. Low complexity predominate over residues 152–167 (SSQSSAVSSVTTSVTT). A compositionally biased stretch (polar residues) spans 173-187 (ENSGSQSPEVSSSDS). A coiled-coil region spans residues 216-628 (GSMSHELSNL…LEQQLHSAAT (413 aa)). A helical; Anchor for type IV membrane protein membrane pass occupies residues 696–716 (VFVIIYMALLHLWVMIVLLTY). Residues 717-728 (SPEMHHDQPYGK) lie on the Lumenal side of the membrane.

Homodimer. Interacts with RAB1A that has been activated by GTP-binding. Interacts with isoform CASP of CUX1. In terms of processing, highly phosphorylated during mitosis. Phosphorylation is barely detectable during interphase.

The protein resides in the golgi apparatus membrane. In terms of biological role, involved in maintaining Golgi structure. Stimulates the formation of Golgi stacks and ribbons. Involved in intra-Golgi retrograde transport. The polypeptide is Golgin subfamily A member 5 (Golga5) (Rattus norvegicus (Rat)).